The sequence spans 208 residues: Thymidylate kinase (208 aa).

An ATP-binding site is contributed by 11–18 (GTEGVGKT).

Belongs to the thymidylate kinase family.

It catalyses the reaction dTMP + ATP = dTDP + ADP. Its function is as follows. Phosphorylation of dTMP to form dTDP in both de novo and salvage pathways of dTTP synthesis. The chain is Thymidylate kinase from Psychrobacter sp. (strain PRwf-1).